Consider the following 421-residue polypeptide: Gamma-glutamyl phosphate reductase (421 aa).

It belongs to the gamma-glutamyl phosphate reductase family.

Its subcellular location is the cytoplasm. It catalyses the reaction L-glutamate 5-semialdehyde + phosphate + NADP(+) = L-glutamyl 5-phosphate + NADPH + H(+). It participates in amino-acid biosynthesis; L-proline biosynthesis; L-glutamate 5-semialdehyde from L-glutamate: step 2/2. In terms of biological role, catalyzes the NADPH-dependent reduction of L-glutamate 5-phosphate into L-glutamate 5-semialdehyde and phosphate. The product spontaneously undergoes cyclization to form 1-pyrroline-5-carboxylate. This is Gamma-glutamyl phosphate reductase from Dinoroseobacter shibae (strain DSM 16493 / NCIMB 14021 / DFL 12).